Here is a 91-residue protein sequence, read N- to C-terminus: UPF0298 protein OB1449 (91 aa).

The protein belongs to the UPF0298 family.

It localises to the cytoplasm. This is UPF0298 protein OB1449 from Oceanobacillus iheyensis (strain DSM 14371 / CIP 107618 / JCM 11309 / KCTC 3954 / HTE831).